We begin with the raw amino-acid sequence, 82 residues long: Acyl carrier protein (82 aa).

Positions 4–79 (EKIFQELKNI…DVVDIIESNL (76 aa)) constitute a Carrier domain. At Ser-39 the chain carries O-(pantetheine 4'-phosphoryl)serine.

The protein belongs to the acyl carrier protein (ACP) family. Post-translationally, 4'-phosphopantetheine is transferred from CoA to a specific serine of apo-ACP by AcpS. This modification is essential for activity because fatty acids are bound in thioester linkage to the sulfhydryl of the prosthetic group.

It is found in the cytoplasm. The protein operates within lipid metabolism; fatty acid biosynthesis. Carrier of the growing fatty acid chain in fatty acid biosynthesis. This Coprothermobacter proteolyticus (strain ATCC 35245 / DSM 5265 / OCM 4 / BT) protein is Acyl carrier protein.